The chain runs to 432 residues: Guanine nucleotide-binding protein subunit alpha (432 aa).

The disordered stretch occupies residues 1–97; sequence MGGCMSTPEA…SKGNKDRSNQ (97 aa). A lipid anchor (N-myristoyl glycine) is attached at Gly-2. Cys-4 carries S-palmitoyl cysteine lipidation. Residues 21 to 52 show a composition bias toward low complexity; that stretch reads PSTSTSSRPPQASTSATATAAGAGTSAANGTA. Residues 111–432 enclose the G-alpha domain; sequence KECKILLLGS…QNALRDSGIL (322 aa). The interval 114–127 is G1 motif; it reads KILLLGSGESGKST. The GTP site is built by Glu-122, Ser-123, Gly-124, Lys-125, Ser-126, Thr-127, Asp-230, Leu-255, Thr-261, Gly-283, Asn-349, Lys-350, Asp-352, and Ala-404. A Mg(2+)-binding site is contributed by Ser-126. The interval 253–261 is G2 motif; it reads DVLRARTKT. Thr-261 lines the Mg(2+) pocket. The G3 motif stretch occupies residues 276–285; the sequence is IHMFDVGGQR. Positions 345–352 are G4 motif; sequence ILFLNKID. Residues 402-407 are G5 motif; it reads TQATDT.

This sequence belongs to the G-alpha family. G proteins are composed of 3 units; alpha, beta and gamma. The alpha chain contains the guanine nucleotide binding site. It depends on Mg(2+) as a cofactor.

Its function is as follows. Guanine nucleotide-binding proteins (G proteins) are involved as modulators or transducers in various transmembrane signaling systems. Involved in the mating pathway. In Cryptococcus neoformans var. neoformans serotype D (strain B-3501A) (Filobasidiella neoformans), this protein is Guanine nucleotide-binding protein subunit alpha (GPA1).